Consider the following 517-residue polypeptide: NAD(P)H-quinone oxidoreductase subunit 2 (517 aa).

14 helical membrane-spanning segments follow: residues 16-36, 43-63, 80-100, 110-130, 133-153, 168-188, 211-231, 245-265, 279-299, 307-327, 335-355, 379-399, 401-421, and 467-487; these read ILPE…DLIF, WLPY…YLAW, LSIV…LMSI, LAEF…LCGA, LVMI…MTGY, LLIG…LYGL, LGLA…ISAV, PTPV…ALAI, WHFV…VVAL, MLAY…VAGT, VFYL…IILF, LALS…GFFG, IYLF…LGLV, and VGIV…NPLF.

The protein belongs to the complex I subunit 2 family. NDH-1 can be composed of about 15 different subunits; different subcomplexes with different compositions have been identified which probably have different functions.

It is found in the cellular thylakoid membrane. The catalysed reaction is a plastoquinone + NADH + (n+1) H(+)(in) = a plastoquinol + NAD(+) + n H(+)(out). The enzyme catalyses a plastoquinone + NADPH + (n+1) H(+)(in) = a plastoquinol + NADP(+) + n H(+)(out). Its function is as follows. NDH-1 shuttles electrons from an unknown electron donor, via FMN and iron-sulfur (Fe-S) centers, to quinones in the respiratory and/or the photosynthetic chain. The immediate electron acceptor for the enzyme in this species is believed to be plastoquinone. Couples the redox reaction to proton translocation, and thus conserves the redox energy in a proton gradient. Cyanobacterial NDH-1 also plays a role in inorganic carbon-concentration. This chain is NAD(P)H-quinone oxidoreductase subunit 2, found in Rippkaea orientalis (strain PCC 8801 / RF-1) (Cyanothece sp. (strain PCC 8801)).